The chain runs to 86 residues: Neurotoxin LmNaTx34.2 (86 aa).

A signal peptide spans 1–18; that stretch reads MKTLILVVIALMVIEVKS. In terms of domain architecture, LCN-type CS-alpha/beta spans 19–85; sequence DGYLMVRAGR…IWTYEKNTCS (67 aa). 4 disulfides stabilise this stretch: cysteine 32/cysteine 84, cysteine 36/cysteine 57, cysteine 43/cysteine 64, and cysteine 47/cysteine 66.

Belongs to the long (4 C-C) scorpion toxin superfamily. Sodium channel inhibitor family. Beta subfamily. In terms of tissue distribution, expressed by the venom gland.

Its subcellular location is the secreted. Binds voltage-independently at site-4 of sodium channels (Nav) and shift the voltage of activation toward more negative potentials thereby affecting sodium channel activation and promoting spontaneous and repetitive firing. This chain is Neurotoxin LmNaTx34.2, found in Lychas mucronatus (Chinese swimming scorpion).